The sequence spans 304 residues: uncharacterized protein (304 aa).

The segment covering 226–244 (SRNSESSRQSNLNSPNDSV) has biased composition (polar residues). Positions 226 to 263 (SRNSESSRQSNLNSPNDSVKFNEFNKSNKSTKTNPNNI) are disordered. The span at 246-262 (FNEFNKSNKSTKTNPNN) shows a compositional bias: low complexity.

This is an uncharacterized protein from Acanthamoeba polyphaga (Amoeba).